A 1038-amino-acid chain; its full sequence is Isoleucine--tRNA ligase (1038 aa).

The 'HIGH' region motif lies at 47 to 57; sequence PFATGLPHYGH. Positions 591–595 match the 'KMSKS' region motif; that stretch reads KMSKR. K594 is a binding site for ATP.

Belongs to the class-I aminoacyl-tRNA synthetase family. IleS type 2 subfamily. As to quaternary structure, monomer. Zn(2+) is required as a cofactor.

The protein resides in the cytoplasm. It catalyses the reaction tRNA(Ile) + L-isoleucine + ATP = L-isoleucyl-tRNA(Ile) + AMP + diphosphate. In terms of biological role, catalyzes the attachment of isoleucine to tRNA(Ile). As IleRS can inadvertently accommodate and process structurally similar amino acids such as valine, to avoid such errors it has two additional distinct tRNA(Ile)-dependent editing activities. One activity is designated as 'pretransfer' editing and involves the hydrolysis of activated Val-AMP. The other activity is designated 'posttransfer' editing and involves deacylation of mischarged Val-tRNA(Ile). The protein is Isoleucine--tRNA ligase of Protochlamydia amoebophila (strain UWE25).